A 558-amino-acid polypeptide reads, in one-letter code: CTP synthase (558 aa).

The amidoligase domain stretch occupies residues 1-271; the sequence is MAARQQTKHL…DAYVVRRLGL (271 aa). Position 18 (Ser-18) interacts with CTP. Ser-18 provides a ligand contact to UTP. ATP is bound by residues 19 to 24 and Asp-76; that span reads SLGKGL. Positions 76 and 145 each coordinate Mg(2+). Residues 152 to 154, 192 to 197, and Lys-228 each bind CTP; these read DIE and KTKPTQ. Residues 192 to 197 and Lys-228 each bind UTP; that span reads KTKPTQ. The Glutamine amidotransferase type-1 domain maps to 296–545; sequence TIALVGKYVD…IRAALLHRCP (250 aa). Gly-359 is an L-glutamine binding site. Catalysis depends on Cys-386, which acts as the Nucleophile; for glutamine hydrolysis. L-glutamine contacts are provided by residues 387 to 390, Glu-410, and Arg-471; that span reads LGLQ. Residues His-518 and Glu-520 contribute to the active site.

Belongs to the CTP synthase family. As to quaternary structure, homotetramer.

The enzyme catalyses UTP + L-glutamine + ATP + H2O = CTP + L-glutamate + ADP + phosphate + 2 H(+). It catalyses the reaction L-glutamine + H2O = L-glutamate + NH4(+). It carries out the reaction UTP + NH4(+) + ATP = CTP + ADP + phosphate + 2 H(+). Its pathway is pyrimidine metabolism; CTP biosynthesis via de novo pathway; CTP from UDP: step 2/2. Allosterically activated by GTP, when glutamine is the substrate; GTP has no effect on the reaction when ammonia is the substrate. The allosteric effector GTP functions by stabilizing the protein conformation that binds the tetrahedral intermediate(s) formed during glutamine hydrolysis. Inhibited by the product CTP, via allosteric rather than competitive inhibition. Functionally, catalyzes the ATP-dependent amination of UTP to CTP with either L-glutamine or ammonia as the source of nitrogen. Regulates intracellular CTP levels through interactions with the four ribonucleotide triphosphates. The polypeptide is CTP synthase (Acidothermus cellulolyticus (strain ATCC 43068 / DSM 8971 / 11B)).